The primary structure comprises 499 residues: Heparin cofactor 2 (499 aa).

The N-terminal stretch at 1 to 19 (MKHSLNALLIFLIITSAWG) is a signal peptide. A Phosphoserine; by FAM20C modification is found at S37. N49 is a glycosylation site (N-linked (GlcNAc...) (complex) asparagine). The interval 68–79 (DWIPEGEEDDDY) is chemotactic activity. Tandem repeats lie at residues 73–83 (GEEDDDYLDLE) and 87–97 (SEDDDYIDIVD). The 2 X 11 AA approximate repeats, Asp/Glu-rich (acidic) (hirudin-like) stretch occupies residues 73 to 97 (GEEDDDYLDLEKIFSEDDDYIDIVD). Sulfotyrosine occurs at positions 79 and 92. The N-linked (GlcNAc...) asparagine glycan is linked to N188. Residues 192 to 212 (KYEITTIHNLFRKLTHRLFRR) form a glycosaminoglycan-binding site region. N387 carries N-linked (GlcNAc...) asparagine glycosylation.

This sequence belongs to the serpin family. In terms of processing, phosphorylated by FAM20C in the extracellular medium. In terms of tissue distribution, expressed predominantly in liver. Also present in plasma. Expressed in plasma (at protein level). Expressed in liver.

Thrombin inhibitor activated by the glycosaminoglycans, heparin or dermatan sulfate. In the presence of the latter, HC-II becomes the predominant thrombin inhibitor in place of antithrombin III (AT-III). Also inhibits chymotrypsin, but in a glycosaminoglycan-independent manner. Functionally, peptides at the N-terminal of HC-II have chemotactic activity for both monocytes and neutrophils. In terms of biological role, shows negligible inhibition, in vitro, of thrombin and tPA and no inhibition of factor Xa, in vitro. This Homo sapiens (Human) protein is Heparin cofactor 2 (SERPIND1).